Reading from the N-terminus, the 384-residue chain is MKFIDEAKIEVAAGKGGNGATSFRREKFVPRGGPDGGDGGKGGSVWAEADENTNTLVEYRFVKRYQAKNGEKGHGSDRYGAGADDIVLKMPVGTLIRDLDTGENVADLTYHGQRVCLAKGGKGGLGNIHFKSSVNRAPKQSTPGEEGEARSLQLELKVLADVGLLGMPNAGKSTLITAVSAARPKIANYPFTTLHPNLGVVRIDENHSFVMADIPGLIEGAAEGAGLGHRFLKHLSRTGLLLHVVDLAPFDETVNPAEEALAIINELRKYDEELYGKPRWLVLNKLDMLDEEEARARTAAFLEAVGWDYPKPDDRFQFDMETPRLFQISALTHQGTQELVHQINQYLIEKKRIEAEKAEAERAATNVEIAEQQPKTDTGVFKPE.

One can recognise an Obg domain in the interval 1–159; that stretch reads MKFIDEAKIE…RSLQLELKVL (159 aa). The interval 20–46 is disordered; the sequence is ATSFRREKFVPRGGPDGGDGGKGGSVW. A compositionally biased stretch (gly residues) spans 33–43; it reads GPDGGDGGKGG. In terms of domain architecture, OBG-type G spans 160 to 348; sequence ADVGLLGMPN…LVHQINQYLI (189 aa). Residues 166–173, 191–195, 213–216, 284–287, and 329–331 each bind GTP; these read GMPNAGKS, FTTLH, DIPG, NKLD, and SAL. Mg(2+) is bound by residues Ser-173 and Thr-193. The segment at 364-384 is disordered; it reads ATNVEIAEQQPKTDTGVFKPE.

Belongs to the TRAFAC class OBG-HflX-like GTPase superfamily. OBG GTPase family. Monomer. Requires Mg(2+) as cofactor.

It is found in the cytoplasm. An essential GTPase which binds GTP, GDP and possibly (p)ppGpp with moderate affinity, with high nucleotide exchange rates and a fairly low GTP hydrolysis rate. Plays a role in control of the cell cycle, stress response, ribosome biogenesis and in those bacteria that undergo differentiation, in morphogenesis control. This chain is GTPase Obg, found in Neisseria meningitidis serogroup A / serotype 4A (strain DSM 15465 / Z2491).